Here is a 34-residue protein sequence, read N- to C-terminus: Photosystem II reaction center protein M (34 aa).

The helical transmembrane segment at 5–25 (ILAFIATALFILVPTAFLLII) threads the bilayer.

It belongs to the PsbM family. PSII is composed of 1 copy each of membrane proteins PsbA, PsbB, PsbC, PsbD, PsbE, PsbF, PsbH, PsbI, PsbJ, PsbK, PsbL, PsbM, PsbT, PsbX, PsbY, PsbZ, Psb30/Ycf12, at least 3 peripheral proteins of the oxygen-evolving complex and a large number of cofactors. It forms dimeric complexes.

Its subcellular location is the plastid. It is found in the chloroplast thylakoid membrane. Its function is as follows. One of the components of the core complex of photosystem II (PSII). PSII is a light-driven water:plastoquinone oxidoreductase that uses light energy to abstract electrons from H(2)O, generating O(2) and a proton gradient subsequently used for ATP formation. It consists of a core antenna complex that captures photons, and an electron transfer chain that converts photonic excitation into a charge separation. This subunit is found at the monomer-monomer interface. The chain is Photosystem II reaction center protein M from Calycanthus floridus var. glaucus (Eastern sweetshrub).